A 149-amino-acid chain; its full sequence is Arginine repressor (149 aa).

Belongs to the ArgR family.

The protein resides in the cytoplasm. Its pathway is amino-acid biosynthesis; L-arginine biosynthesis [regulation]. In terms of biological role, regulates arginine biosynthesis genes. The sequence is that of Arginine repressor from Bacillus pumilus (strain SAFR-032).